The sequence spans 463 residues: EPD1-interacting receptor-like cytoplasmic serine/threonine-protein kinase (463 aa).

The region spanning 91-383 is the Protein kinase domain; sequence FSSANFLGKG…LTDIPIGPFV (293 aa). ATP-binding positions include 97-105 and Lys-126; that span reads LGKGGFGPV. Tyr-171 and Tyr-173 each carry phosphotyrosine. Asp-221 (proton acceptor) is an active-site residue.

The protein belongs to the protein kinase superfamily. Ser/Thr protein kinase family. As to quaternary structure, interacts with the V.dahliae elicitor EPD1 (AC G2WWH6). Post-translationally, phosphorylated at Tyr-171 and Tyr-173 in the presence of pathogen-associated molecular patterns (PAMPs); this triggers the expression of pathogenesis-related genes.

The protein resides in the cell membrane. The catalysed reaction is L-seryl-[protein] + ATP = O-phospho-L-seryl-[protein] + ADP + H(+). It catalyses the reaction L-threonyl-[protein] + ATP = O-phospho-L-threonyl-[protein] + ADP + H(+). Functionally, required for pathogen-associated molecular pattern (PAMP, e.g. chitin and flg22)-triggered immunity (PTI) involving reactive oxygen species (ROS) accumulation and triggering plant defense, including defense-related gene expression (e.g. PR1 and LOX). Ensures specific recognition of the EPD1 effector of Verticillium dahliae, resulting in a hypersensitive response known as effector-triggered immunity (ETI), characterized by the activation of programmed cell death to limit infection by the pathogen. Priming plants with the incompatible pathogen V.dahliae leads to an increased resistance to both the broad-host-range filamentous pathogen Botrytis cinerea and the semibiotrophic pathogen Phytophthora capsici, as a result of systemic acquired resistance (SAR). The chain is EPD1-interacting receptor-like cytoplasmic serine/threonine-protein kinase from Nicotiana benthamiana.